Here is a 130-residue protein sequence, read N- to C-terminus: Small ribosomal subunit protein uS8 (130 aa).

The protein belongs to the universal ribosomal protein uS8 family. In terms of assembly, part of the 30S ribosomal subunit. Contacts proteins S5 and S12.

Its function is as follows. One of the primary rRNA binding proteins, it binds directly to 16S rRNA central domain where it helps coordinate assembly of the platform of the 30S subunit. This chain is Small ribosomal subunit protein uS8, found in Teredinibacter turnerae (strain ATCC 39867 / T7901).